Consider the following 5147-residue polypeptide: Cadherin-related tumor suppressor (5147 aa).

The signal sequence occupies residues 1-35 (MERLLLLFFLLLAGRESLCQTGDTKLELLAPRGRS). Cadherin domains lie at 36–156 (YATT…SPEF), 157–270 (PEPS…PPIF), 271–382 (DHSD…DPII), 383–494 (SFRF…EPVF), 495–599 (EKSE…APQF), 600–708 (SQRE…DPQF), 709–820 (YPRH…LEML), 821–942 (ECGQ…APVF), 943–1049 (ALDR…TPVF), 1050–1153 (DHTS…APQF), 1154–1278 (TNST…APEF), 1279–1384 (LRAP…APEF), 1385–1489 (TQSS…PPIF), 1490–1601 (PSTA…APVF), 1602–1713 (VSMN…VPQF), 1714–1823 (EQRS…PPQF), 1824–1922 (LDTP…PPLF), 1923–2027 (EDTV…APIF), 2028–2167 (DPMS…VPVF), 2168–2278 (ISAN…SPVF), 2279–2385 (DPKQ…PTFL), 2386–2491 (DSPY…DPVF), 2492–2596 (ELQS…IPKF), 2597–2703 (DSTT…FPTF), 2704–2810 (AYMA…APVM), 2811–2913 (EQLI…PPKF), 2914–3013 (TRLF…APEF), 3014–3124 (EHSF…PPKF), 3125–3229 (EQAE…TPRF), 3230–3334 (SVNS…PPVF), 3335–3439 (NHKE…YPQF), 3440–3545 (LQPV…PPEF), 3546–3651 (IKHY…GPTF), and 3652–3756 (TPEG…NPST). The Extracellular portion of the chain corresponds to 36-4583 (YATTYEQYAA…GQDAAQVADP (4548 aa)). N-linked (GlcNAc...) asparagine glycans are attached at residues Asn239, Asn257, Asn276, Asn280, Asn402, and Asn461. 2 N-linked (GlcNAc...) asparagine glycosylation sites follow: Asn605 and Asn631. Asn1155, Asn1367, and Asn1458 each carry an N-linked (GlcNAc...) asparagine glycan. 3 N-linked (GlcNAc...) asparagine glycosylation sites follow: Asn1751, Asn1831, and Asn1880. Asn2080, Asn2171, Asn2247, Asn2290, Asn2437, and Asn2581 each carry an N-linked (GlcNAc...) asparagine glycan. Residue Asn2799 is glycosylated (N-linked (GlcNAc...) asparagine). 3 N-linked (GlcNAc...) asparagine glycosylation sites follow: Asn2920, Asn2946, and Asn2967. N-linked (GlcNAc...) asparagine glycosylation is found at Asn3167, Asn3303, Asn3386, Asn3389, and Asn3525. 3 N-linked (GlcNAc...) asparagine glycosylation sites follow: Asn3852, Asn3865, and Asn3905. EGF-like domains are found at residues 3950-4011 (GYEP…EQCS), 4013-4049 (RQDPCLPNPCHSQVQCRRLGSDFQCMCPANRDGKHCE), 4052-4090 (RSDVCYSKPCRNGGSCQRSPDGSSYFCLCRPGFRGNQCE), and 4092-4128 (VSDSCRPNPCLHGGLCVSLKPGYKCNCTPGRYGRHCE). Cystine bridges form between Cys3954/Cys3966, Cys3960/Cys3999, Cys4001/Cys4010, Cys4017/Cys4028, Cys4022/Cys4037, Cys4039/Cys4048, Cys4056/Cys4067, Cys4061/Cys4078, Cys4080/Cys4089, Cys4096/Cys4107, Cys4101/Cys4116, Cys4118/Cys4127, Cys4294/Cys4320, Cys4325/Cys4341, Cys4334/Cys4350, and Cys4352/Cys4361. Residues 4129 to 4320 (RFSYGFQPLS…LQQKGILAGC (192 aa)) form the Laminin G-like 1 domain. A glycan (N-linked (GlcNAc...) asparagine) is linked at Asn4306. The 42-residue stretch at 4321–4362 (NRQACQPALAAERCGGFAGQCIDRWSSSLCQCGGHLQSPDCS) folds into the EGF-like 5 domain. The region spanning 4402 to 4569 (DNQQMRERRA…RYHGKIESGC (168 aa)) is the Laminin G-like 2 domain. N-linked (GlcNAc...) asparagine glycosylation is found at Asn4414, Asn4471, Asn4487, Asn4539, and Asn4550. Cys4536 and Cys4569 form a disulfide bridge. A helical transmembrane segment spans residues 4584-4609 (LSIGFTLVIVFFVILVVAILGSYVIY). At 4610 to 5147 (RFRGKQEKIG…NGPAAPEEYV (538 aa)) the chain is on the cytoplasmic side. An essential for stability of mitochondrial electron chain complexes I and V, and promotes interaction with ND-24 region spans residues 4744–4771 (PEHYDLENASSIAPSDIDIVYHYKGYRE). 3 disordered regions span residues 4787–4850 (AYTH…SQQP), 4871–4921 (TSSS…QTSM), and 4967–5041 (GDVD…PIPP). The span at 4826-4835 (SASRTHQSTP) shows a compositional bias: polar residues. Low complexity-rich tracts occupy residues 4838–4850 (RLSPSSELSSQQP) and 4891–4918 (SPVMSQLSGQSSSASRQKPGVPQQQAQQ). Ser4843 carries the post-translational modification Phosphoserine. The span at 4972-5008 (HSSTSTDESGNDSFTCSEIEYDNNSLSGDGKYSTSKS) shows a compositional bias: polar residues. Residues Ser5054 and Ser5061 each carry the phosphoserine modification. The tract at residues 5113-5147 (PDTNGPSQQQQQQTQVVSTLRMPSSNGPAAPEEYV) is disordered. A compositionally biased stretch (low complexity) spans 5119–5131 (SQQQQQQTQVVST).

Interacts with Fbxl7. Ft-mito interacts with NADH dehydrogenase subunit ND-24 and with ATP synthase subunit ATPsynC. In terms of processing, phosphorylated by fj on Ser/Thr of cadherin domains. Phosphorylation by fj enhances binding to ds. Phosphorylated in the cytoplasmic domain in a dco-dependent manner which is promoted by ds. Proteolytically cleaved to yield stably associated N- and C-terminal fragments. The C-terminal fragment is processed further to release a 68 kDa mitochondrial fragment, Ft-mito.

It localises to the cell membrane. The protein resides in the apical cell membrane. The protein localises to the mitochondrion. In terms of biological role, involved in regulation of planar cell polarity in the compound eye where it is required for correct specification of the R3 and R4 photoreceptor cells by regulating Fz activity in the R3/R4 precursor cells. This is likely to occur through creation of an ft gradient so that the equatorial R3/R4 precursor cell has a higher level of ft function than its polar neighbor. Also required for planar cell polarity of wing hairs. Mediates heterophilic cell adhesion in vitro and is required to stabilize ds on the cell surface. Involved in regulation of eye imaginal disk size. Upstream component of the Hippo pathway where it is likely to act as a cell surface receptor involved in regulation of tissue size and is required for the localization and stability of ex. Probably acts as a cell surface receptor for ds. Its function is as follows. Regulates mitochondrial electron transport chain integrity and promotes oxidative phosphorylation. This chain is Cadherin-related tumor suppressor, found in Drosophila melanogaster (Fruit fly).